The sequence spans 56 residues: Ovomucoid (56 aa).

Positions 6–56 constitute a Kazal-like domain; sequence VDCSEYPKPACTMEQRPLCGSDNKTYGNKCNFCNAVVESNGTLTLSHFGKC. 3 disulfide bridges follow: C8-C38, C16-C35, and C24-C56. The N-linked (GlcNAc...) asparagine glycan is linked to N45.

It is found in the secreted. This Afropavo congensis (Congo peafowl) protein is Ovomucoid.